A 122-amino-acid polypeptide reads, in one-letter code: Large ribosomal subunit protein bL19 (122 aa).

The protein belongs to the bacterial ribosomal protein bL19 family.

Its function is as follows. This protein is located at the 30S-50S ribosomal subunit interface and may play a role in the structure and function of the aminoacyl-tRNA binding site. The protein is Large ribosomal subunit protein bL19 of Acinetobacter baumannii (strain AB307-0294).